We begin with the raw amino-acid sequence, 269 residues long: Putative aga operon transcriptional repressor (269 aa).

One can recognise an HTH deoR-type domain in the interval 15 to 70; the sequence is TSERREQIIQRLRQQGSVQVNDLSALYGVSTVTIRNDLAFLEKQGIAVRAYGGALI. The segment at residues 32–51 is a DNA-binding region (H-T-H motif); that stretch reads VQVNDLSALYGVSTVTIRND.

Its function is as follows. Probable repressor for the aga operon for N-acetyl galactosamine transport and metabolism. The polypeptide is Putative aga operon transcriptional repressor (agaR) (Escherichia coli O157:H7).